We begin with the raw amino-acid sequence, 68 residues long: Large ribosomal subunit protein bL35 (68 aa).

It belongs to the bacterial ribosomal protein bL35 family.

This is Large ribosomal subunit protein bL35 from Fusobacterium nucleatum subsp. nucleatum (strain ATCC 25586 / DSM 15643 / BCRC 10681 / CIP 101130 / JCM 8532 / KCTC 2640 / LMG 13131 / VPI 4355).